We begin with the raw amino-acid sequence, 474 residues long: Amidophosphoribosyltransferase (474 aa).

A propeptide spanning residues 1–10 (MLGESEVRDK) is cleaved from the precursor. Residue Cys11 is the Nucleophile of the active site. Residues 11-234 (CGIVGIYSQD…PGEILHLNRG (224 aa)) form the Glutamine amidotransferase type-2 domain. Cys250 serves as a coordination point for [4Fe-4S] cluster. 3 residues coordinate Mg(2+): Ser297, Asp359, and Asp360. Positions 396, 447, and 450 each coordinate [4Fe-4S] cluster.

The protein in the C-terminal section; belongs to the purine/pyrimidine phosphoribosyltransferase family. Mg(2+) is required as a cofactor. Requires [4Fe-4S] cluster as cofactor.

It carries out the reaction 5-phospho-beta-D-ribosylamine + L-glutamate + diphosphate = 5-phospho-alpha-D-ribose 1-diphosphate + L-glutamine + H2O. It functions in the pathway purine metabolism; IMP biosynthesis via de novo pathway; N(1)-(5-phospho-D-ribosyl)glycinamide from 5-phospho-alpha-D-ribose 1-diphosphate: step 1/2. Catalyzes the formation of phosphoribosylamine from phosphoribosylpyrophosphate (PRPP) and glutamine. This chain is Amidophosphoribosyltransferase, found in Methanothermobacter thermautotrophicus (strain ATCC 29096 / DSM 1053 / JCM 10044 / NBRC 100330 / Delta H) (Methanobacterium thermoautotrophicum).